Reading from the N-terminus, the 334-residue chain is Thiamine-binding periplasmic protein (334 aa).

Residues 1–23 (MRLLSLLTFSLFAVIGLAPAAQA) form the signal peptide. Thiamine contacts are provided by residues 64–65 (DG), 166–167 (AT), W202, and 220–223 (YTTS).

This sequence belongs to the bacterial solute-binding protein 1 family. As to quaternary structure, the complex is composed of two ATP-binding proteins (ThiQ), two transmembrane proteins (ThiP) and a solute-binding protein (ThiB).

It localises to the periplasm. Functionally, part of the ABC transporter complex ThiBPQ involved in thiamine import. The protein is Thiamine-binding periplasmic protein (thiB) of Brucella abortus biovar 1 (strain 9-941).